Here is a 494-residue protein sequence, read N- to C-terminus: MFNYSGLNEECGVFGIWNHPEAAQLTYMGLHSLQHRGQEGAGIVVSDQNELKGERGLGLLTEAIKDDQMERLKGYQHAIGHVRYATSGNKGIENIQPFLYHFYDMSVGICHNGNLINAKSLRQNLEKQGAIFHSSSDTEVIMHLIRRSKAPTFEEALKESLRKVKGGFTFAILTKDALYGAVDPNAIRPLVVGKMKDGTYILASETCAIDVLGAEFVQDIHAGEYVVINDKGITVKSYTHHTTTAISAMEYIYFARPDSTIAGKNVHAVRKASGKKLAQESPVNADMVIGVPNSSLSAASGYAEEIGLPYEMGLVKNQYVARTFIQPTQELREQGVRVKLSAVKDIVDGKNIILVDDSIVRGTTIRRIVKMLKDSGANKVHVRIASPEFMFPSFYGIDVSTTAELISASKSPEEIKDYIGADSLAYLSVDGLIESIGLDYDAPYSGLCVESFTGDYPAGLYDYEANYKAHLSHRQKQYISKNKHFFDSEGNLNV.

The propeptide occupies 1–10; that stretch reads MFNYSGLNEE. Catalysis depends on cysteine 11, which acts as the Nucleophile. The region spanning 11-231 is the Glutamine amidotransferase type-2 domain; sequence CGVFGIWNHP…AGEYVVINDK (221 aa). Mg(2+) contacts are provided by serine 294, aspartate 356, and aspartate 357.

The protein in the C-terminal section; belongs to the purine/pyrimidine phosphoribosyltransferase family. Mg(2+) serves as cofactor.

It carries out the reaction 5-phospho-beta-D-ribosylamine + L-glutamate + diphosphate = 5-phospho-alpha-D-ribose 1-diphosphate + L-glutamine + H2O. Its pathway is purine metabolism; IMP biosynthesis via de novo pathway; N(1)-(5-phospho-D-ribosyl)glycinamide from 5-phospho-alpha-D-ribose 1-diphosphate: step 1/2. Catalyzes the formation of phosphoribosylamine from phosphoribosylpyrophosphate (PRPP) and glutamine. The chain is Amidophosphoribosyltransferase from Staphylococcus aureus (strain COL).